The following is a 1012-amino-acid chain: MDALDASKLLDEELYSRQLYVLGSPAMQRIQGARVLVSGLQGLGAEVAKNLVLMGVGSLTLHDPHPTCWSDLAAQFLLSEQDLERSRAEASQELLAQLNRAVQVVVHTGDITEDLLLDFQVVVLTAAKLEEQLKVGTLCHKHGVCFLAADTRGLVGQLFCDFGEDFTVQDPTEAEPLTAAIQHISQGSPGILTLRKGANTHYFRDGDLVTFSGIEGMVELNDCDPRSIHVREDGSLEIGDTTTFSRYLRGGAITEVKRPKTVRHKSLDTALLQPHVVAQSSQEVHHAHCLHQAFCALHKFQHLHGRPPQPWDPVDAETVVGLARDLEPLKRTEEEPLEEPLDEALVRTVALSSAGVLSPMVAMLGAVAAQEVLKAISRKFMPLDQWLYFDALDCLPEDGELLPSPEDCALRGSRYDGQIAVFGAGFQEKLRRQHYLLVGAGAIGCELLKVFALVGLGAGNSGGLTVVDMDHIERSNLSRQFLFRSQDVGRPKAEVAAAAARGLNPDLQVIPLTYPLDPTTEHIYGDNFFSRVDGVAAALDSFQARRYVAARCTHYLKPLLEAGTSGTWGSATVFMPHVTEAYRAPASAAASEDAPYPVCTVRYFPSTAEHTLQWARHEFEELFRLSAETINHHQQAHTSLADMDEPQTLTLLKPVLGVLRVRPQNWQDCVAWALGHWKLCFHYGIKQLLRHFPPNKVLEDGTPFWSGPKQCPQPLEFDTNQDTHLLYVLAAANLYAQMHGLPGSQDWTALRELLKLLPQPDPQQMAPIFASNLELASASAEFGPEQQKELNKALEVWSVGPPLKPLMFEKDDDSNFHVDFVVAAASLRCQNYGIPPVNRAQSKRIVGQIIPAIATTTAAVAGLLGLELYKVVSGPRPRSAFRHSYLHLAENYLIRYMPFAPAIQTFHHLKWTSWDRLKVPAGQPERTLESLLAHLQEQHGLRVRILLHGSALLYAAGWSPEKQAQHLPLRVTELVQQLTGQAPAPGQRVLVLELSCEGDDEDTAFPPLHYEL.

Residues 23–159 (GSPAMQRIQG…DTRGLVGQLF (137 aa)) form a 1-1 repeat. Residues 23–575 (GSPAMQRIQG…GTWGSATVFM (553 aa)) form a 2 approximate repeats region. S266 is modified (phosphoserine). One copy of the 1-2 repeat lies at 423–575 (GAGFQEKLRR…GTWGSATVFM (153 aa)). Residue 442-471 (AIGCELLKVFALVGLGAGNSGGLTVVDMDH) coordinates ATP. Catalysis depends on C599, which acts as the Glycyl thioester intermediate.

It belongs to the ubiquitin-activating E1 family. In terms of assembly, (Microbial infection) Interacts with human cytomegalovirus proteins NEC2/UL50 and UL26; these interactions inhibit ISGylation and cause proteasomal degradation of UBA7. (Microbial infection) Interacts with rotavirus non-structural protein 5 (NSP5); this interaction promotes UBA7 proteasomal degradation. As to quaternary structure, monomer. Binds and is involved in the conjugation of G1P2/ISG15. Post-translationally, ISGylated. In terms of processing, ubiquitinated by RNF170. Expressed in a variety of normal and tumor cell types, but is reduced in lung cancer cell lines.

It localises to the cytoplasm. Its subcellular location is the nucleus. The protein operates within protein modification; protein ubiquitination. Its function is as follows. E1-activating enzyme that catalyzes the covalent conjugation of the ubiquitin-like protein product of ISG15 to additional interferon stimulated proteins (ISGs) as well as other cellular proteins such as P53 in a process termed protein ISGylation. Plays an essential role in antiviral immunity together with ISG15 by restricting the replication of many viruses including rabies virus, influenza virus, sindbis virus, rotavirus or human cytomegalovirus. For example, ISG15 modification of influenza A protein NS1 disrupts the association of the NS1 with importin-alpha leading to NS1 nuclear import inhibition. ISGylation of human cytomegalovirs protein UL26 regulates its stability and inhibits its activities to suppress NF-kappa-B signaling. This Homo sapiens (Human) protein is Ubiquitin-like modifier-activating enzyme 7.